Here is a 112-residue protein sequence, read N- to C-terminus: Conotoxin vil14.5 (112 aa).

An N-terminal signal peptide occupies residues 1–22 (MGFRVLVLVVMATTSALPFTFS). A propeptide spanning residues 23 to 85 (EEPGRSPFRP…FAELSVGQRR (63 aa)) is cleaved from the precursor. The tract at residues 53–74 (RADGQPPDMRQPEMRRPEVRQP) is disordered. Residues 62–74 (RQPEMRRPEVRQP) are compositionally biased toward basic and acidic residues. 2 cysteine pairs are disulfide-bonded: Cys-91–Cys-111 and Cys-95–Cys-107.

This sequence belongs to the conotoxin R superfamily. In terms of tissue distribution, expressed by the venom duct.

It localises to the secreted. The protein is Conotoxin vil14.5 of Conus villepinii (Villepin's cone).